A 433-amino-acid chain; its full sequence is MITRFAPSPTGLIHLGNARTALIAYFAARSSGGEFILRIDDTDVTRIKSEYVNKIFTDLSWLGIKEDLCIKQSERCELYANAVVKLKESGRIYPCYETPEELEIERRSLLARALPPVYRRKNRPQHSTRLPYYRFELDPDRVVIWEDKLRGKIVIDLHSTSDPIVIRENGTYTYMLPSVVDDIECRISTIIRGEDHISNTAVQIQMFEALGCTEIPKFAHMPLLKLQTGKMSKRAGGNEIQTFRENYIEPEVICLYLLNLGSKSRSTFKNYKDYSNFNLENYSSSSSVTVLEDEIYSLNADFLRLSNYEDLARRLGGVSKTFWDAVKNNVKSIPEVNYWWEICTTEAKLYPGIGCNAQLVRDAISVLPQEEVSRETYRRWVELIVENYRYDKREVHINLRLALTGKVGGPEMAAILPFISRERILIRLNDSLS.

The 'HIGH' region signature appears at 7–17 (PSPTGLIHLGN). The short motif at 230 to 234 (KMSKR) is the 'KMSKS' region element. ATP is bound at residue K233.

It belongs to the class-I aminoacyl-tRNA synthetase family. Glutamate--tRNA ligase type 1 subfamily. Monomer.

It localises to the cytoplasm. It carries out the reaction tRNA(Glu) + L-glutamate + ATP = L-glutamyl-tRNA(Glu) + AMP + diphosphate. Functionally, catalyzes the attachment of glutamate to tRNA(Glu) in a two-step reaction: glutamate is first activated by ATP to form Glu-AMP and then transferred to the acceptor end of tRNA(Glu). This is Glutamate--tRNA ligase 1 from Neorickettsia sennetsu (strain ATCC VR-367 / Miyayama) (Ehrlichia sennetsu).